A 409-amino-acid polypeptide reads, in one-letter code: Translation initiation factor 2 subunit gamma (409 aa).

Positions Q6–E203 constitute a tr-type G domain. The tract at residues G15–T22 is G1. Residues D18, T22, G43, and S45 each contribute to the Mg(2+) site. D18–T23 contributes to the GTP binding site. A G2 region spans residues G43–R47. Residues D90–G93 are G3. GTP-binding positions include N146–D149 and S181–G183. The interval N146–D149 is G4. The G5 stretch occupies residues S181–G183.

Belongs to the TRAFAC class translation factor GTPase superfamily. Classic translation factor GTPase family. EIF2G subfamily. Heterotrimer composed of an alpha, a beta and a gamma chain. Mg(2+) is required as a cofactor.

The enzyme catalyses GTP + H2O = GDP + phosphate + H(+). EIF-2 functions in the early steps of protein synthesis by forming a ternary complex with GTP and initiator tRNA. In Haloarcula marismortui (strain ATCC 43049 / DSM 3752 / JCM 8966 / VKM B-1809) (Halobacterium marismortui), this protein is Translation initiation factor 2 subunit gamma.